Here is a 512-residue protein sequence, read N- to C-terminus: Altronate oxidoreductase (512 aa).

26–37 is an NAD(+) binding site; it reads VLQFGEGNFLRG.

The protein belongs to the mannitol dehydrogenase family. UxaB subfamily.

The catalysed reaction is D-altronate + NAD(+) = keto-D-tagaturonate + NADH + H(+). It participates in carbohydrate metabolism; pentose and glucuronate interconversion. The polypeptide is Altronate oxidoreductase (Halalkalibacterium halodurans (strain ATCC BAA-125 / DSM 18197 / FERM 7344 / JCM 9153 / C-125) (Bacillus halodurans)).